Here is a 44-residue protein sequence, read N- to C-terminus: Photosystem I reaction center subunit IX (44 aa).

A helical transmembrane segment spans residues 7-27; sequence YLSTAPVLATLWFGSLAGLLI.

The protein belongs to the PsaJ family.

It localises to the plastid. Its subcellular location is the chloroplast thylakoid membrane. Functionally, may help in the organization of the PsaE and PsaF subunits. This is Photosystem I reaction center subunit IX from Calycanthus floridus var. glaucus (Eastern sweetshrub).